A 92-amino-acid chain; its full sequence is DNA-binding protein HU (92 aa).

The protein belongs to the bacterial histone-like protein family. As to quaternary structure, homodimer.

Its function is as follows. Histone-like DNA-binding protein which is capable of wrapping DNA to stabilize it, and thus to prevent its denaturation under extreme environmental conditions. The chain is DNA-binding protein HU (hup) from Buchnera aphidicola subsp. Baizongia pistaciae (strain Bp).